The sequence spans 62 residues: Short neurotoxin C (62 aa).

Residues 1–16 show a composition bias toward polar residues; that stretch reads RRCFNQQSSQPQTNKS. The tract at residues 1–22 is disordered; it reads RRCFNQQSSQPQTNKSCPPGEN. Disulfide bonds link Cys-3-Cys-24, Cys-17-Cys-41, Cys-43-Cys-54, and Cys-55-Cys-60.

Belongs to the three-finger toxin family. Short-chain subfamily. Type I alpha-neurotoxin sub-subfamily. In terms of tissue distribution, expressed by the venom gland.

It is found in the secreted. Its function is as follows. Binds to muscle nicotinic acetylcholine receptor (nAChR) and inhibit acetylcholine from binding to the receptor, thereby impairing neuromuscular transmission. This Laticauda laticaudata (Blue-ringed sea krait) protein is Short neurotoxin C.